The chain runs to 207 residues: High mobility group protein B2 (207 aa).

2 consecutive DNA-binding regions (HMG box) follow at residues 9-79 (PRGK…KNYV) and 95-163 (PKRP…AAYR). Cysteine sulfonic acid (-SO3H); alternate is present on residues Cys-23 and Cys-45. Cysteines 23 and 45 form a disulfide. The segment covering 52–76 (MSSKEKGKFEEMAKGDKARYDREMK) has biased composition (basic and acidic residues). The segment at 52–102 (MSSKEKGKFEEMAKGDKARYDREMKNYVPPKGEKKGKKKDPNAPKRPPSAF) is disordered. The residue at position 106 (Cys-106) is a Cysteine sulfonic acid (-SO3H). A compositionally biased stretch (basic and acidic residues) spans 162–172 (YRAKSKSDAGK). Positions 162-207 (YRAKSKSDAGKKGPGRPAGSKKKAEPEEEEEEEEDEEEEEEEEDEE) are disordered. Over residues 187-207 (PEEEEEEEEDEEEEEEEEDEE) the composition is skewed to acidic residues.

This sequence belongs to the HMGB family. Post-translationally, reduction/oxidation of cysteine residues Cys-23, Cys-45 and Cys-106 and a possible intramolecular disulfide bond involving Cys-23 and Cys-45 give rise to different redox forms with specific functional activities in various cellular compartments: 1- fully reduced HMGB2 (HMGB2C23hC45hC106h), 2- disulfide HMGB2 (HMGB2C23-C45C106h) and 3- sulfonyl HMGB2 (HMGB2C23soC45soC106so).

It localises to the nucleus. The protein resides in the chromosome. The protein localises to the cytoplasm. It is found in the secreted. Multifunctional protein with various roles in different cellular compartments. May act in a redox sensitive manner. Associates with chromatin and binds DNA with a preference to non-canonical DNA structures such as single-stranded DNA. Can bent DNA and enhance DNA flexibility by looping thus providing a mechanism to promote activities on various gene promoters. Proposed to be involved in the innate immune response to nucleic acids by acting as a cytoplasmic promiscuous immunogenic DNA/RNA sensor. Involved in inflammatory response to antigenic stimulus coupled with pro-inflammatory activity. The protein is High mobility group protein B2 (HMGB2) of Gallus gallus (Chicken).